Here is a 133-residue protein sequence, read N- to C-terminus: Large ribosomal subunit protein bL19 (133 aa).

Residues 114–133 (IAERQMTAASKEEPAEKSEA) are disordered. The span at 123 to 133 (SKEEPAEKSEA) shows a compositional bias: basic and acidic residues.

Belongs to the bacterial ribosomal protein bL19 family.

Its function is as follows. This protein is located at the 30S-50S ribosomal subunit interface and may play a role in the structure and function of the aminoacyl-tRNA binding site. This is Large ribosomal subunit protein bL19 from Phenylobacterium zucineum (strain HLK1).